A 206-amino-acid polypeptide reads, in one-letter code: Triosephosphate isomerase (206 aa).

His-76 (electrophile) is an active-site residue. The active-site Proton acceptor is Glu-146.

The protein belongs to the triosephosphate isomerase family. As to quaternary structure, homodimer.

The enzyme catalyses D-glyceraldehyde 3-phosphate = dihydroxyacetone phosphate. It functions in the pathway carbohydrate biosynthesis; gluconeogenesis. Its pathway is carbohydrate degradation; glycolysis; D-glyceraldehyde 3-phosphate from glycerone phosphate: step 1/1. The protein is Triosephosphate isomerase (Tpi) of Anopheles merus (Mosquito).